Reading from the N-terminus, the 244-residue chain is Phosphatidylserine decarboxylase proenzyme (244 aa).

The active-site Schiff-base intermediate with substrate; via pyruvic acid is the Ser-212. At Ser-212 the chain carries Pyruvic acid (Ser); by autocatalysis.

Belongs to the phosphatidylserine decarboxylase family. PSD-A subfamily. In terms of assembly, heterodimer of a large membrane-associated beta subunit and a small pyruvoyl-containing alpha subunit. Pyruvate is required as a cofactor. In terms of processing, is synthesized initially as an inactive proenzyme. Formation of the active enzyme involves a self-maturation process in which the active site pyruvoyl group is generated from an internal serine residue via an autocatalytic post-translational modification. Two non-identical subunits are generated from the proenzyme in this reaction, and the pyruvate is formed at the N-terminus of the alpha chain, which is derived from the carboxyl end of the proenzyme. The post-translation cleavage follows an unusual pathway, termed non-hydrolytic serinolysis, in which the side chain hydroxyl group of the serine supplies its oxygen atom to form the C-terminus of the beta chain, while the remainder of the serine residue undergoes an oxidative deamination to produce ammonia and the pyruvoyl prosthetic group on the alpha chain.

Its subcellular location is the cell membrane. The catalysed reaction is a 1,2-diacyl-sn-glycero-3-phospho-L-serine + H(+) = a 1,2-diacyl-sn-glycero-3-phosphoethanolamine + CO2. The protein operates within phospholipid metabolism; phosphatidylethanolamine biosynthesis; phosphatidylethanolamine from CDP-diacylglycerol: step 2/2. Catalyzes the formation of phosphatidylethanolamine (PtdEtn) from phosphatidylserine (PtdSer). This Granulibacter bethesdensis (strain ATCC BAA-1260 / CGDNIH1) protein is Phosphatidylserine decarboxylase proenzyme.